The primary structure comprises 455 residues: Argininosuccinate lyase (455 aa).

Belongs to the lyase 1 family. Argininosuccinate lyase subfamily.

The protein resides in the cytoplasm. It catalyses the reaction 2-(N(omega)-L-arginino)succinate = fumarate + L-arginine. The protein operates within amino-acid biosynthesis; L-arginine biosynthesis; L-arginine from L-ornithine and carbamoyl phosphate: step 3/3. This chain is Argininosuccinate lyase, found in Shewanella oneidensis (strain ATCC 700550 / JCM 31522 / CIP 106686 / LMG 19005 / NCIMB 14063 / MR-1).